The primary structure comprises 276 residues: Aspartate dehydrogenase domain-containing protein (276 aa).

The protein belongs to the L-aspartate dehydrogenase family.

The protein is Aspartate dehydrogenase domain-containing protein (aspdh) of Danio rerio (Zebrafish).